The chain runs to 354 residues: Peptide chain release factor 1 (354 aa).

Gln-230 is subject to N5-methylglutamine.

This sequence belongs to the prokaryotic/mitochondrial release factor family. Methylated by PrmC. Methylation increases the termination efficiency of RF1.

Its subcellular location is the cytoplasm. Peptide chain release factor 1 directs the termination of translation in response to the peptide chain termination codons UAG and UAA. This chain is Peptide chain release factor 1, found in Novosphingobium aromaticivorans (strain ATCC 700278 / DSM 12444 / CCUG 56034 / CIP 105152 / NBRC 16084 / F199).